A 193-amino-acid polypeptide reads, in one-letter code: Rho-related protein racB (193 aa).

GTP is bound by residues alanine 13, glycine 15, lysine 16, threonine 17, cysteine 18, tyrosine 32, threonine 35, glycine 60, lysine 116, aspartate 118, and alanine 159. Threonine 17 contacts Mg(2+). Short sequence motifs (switch) lie at residues 26–37 (NAFPTEYVPTVF) and 57–75 (DTAG…YPQT). Threonine 35 contributes to the Mg(2+) binding site. Cysteine 190 is subject to Cysteine methyl ester. A lipid anchor (S-geranylgeranyl cysteine) is attached at cysteine 190. A propeptide spans 191 to 193 (LIF) (removed in mature form).

It belongs to the small GTPase superfamily. Rho family. Requires Mg(2+) as cofactor.

Its subcellular location is the cell membrane. The protein resides in the cytoplasm. The protein localises to the cytoskeleton. The enzyme catalyses GTP + H2O = GDP + phosphate + H(+). With respect to regulation, regulated by guanine nucleotide exchange factors (GEFs) which promote the exchange of bound GDP for free GTP, GTPase activating proteins (GAPs) which increase the GTP hydrolysis activity, and GDP dissociation inhibitors which inhibit the dissociation of the nucleotide from the GTPase. Its function is as follows. Small GTPase which cycles between active GTP-bound and inactive GDP-bound states. This Entamoeba histolytica (strain ATCC 30459 / HM-1:IMSS / ABRM) protein is Rho-related protein racB.